We begin with the raw amino-acid sequence, 318 residues long: CRISPR-associated endonuclease Cas1 1 (318 aa).

Mn(2+)-binding residues include E160, H225, and E240.

It belongs to the CRISPR-associated endonuclease Cas1 family. Homodimer, forms a heterotetramer with a Cas2 homodimer. Mg(2+) serves as cofactor. Mn(2+) is required as a cofactor.

In terms of biological role, CRISPR (clustered regularly interspaced short palindromic repeat), is an adaptive immune system that provides protection against mobile genetic elements (viruses, transposable elements and conjugative plasmids). CRISPR clusters contain spacers, sequences complementary to antecedent mobile elements, and target invading nucleic acids. CRISPR clusters are transcribed and processed into CRISPR RNA (crRNA). Acts as a dsDNA endonuclease. Involved in the integration of spacer DNA into the CRISPR cassette. The sequence is that of CRISPR-associated endonuclease Cas1 1 from Thermodesulfovibrio yellowstonii (strain ATCC 51303 / DSM 11347 / YP87).